The primary structure comprises 527 residues: Probable guanine deaminase (527 aa).

Zn(2+) contacts are provided by histidine 79 and histidine 81. Residues 81 to 84, 212 to 213, 239 to 242, and aspartate 329 each bind substrate; these read HAPQ, RF, and HISE. The Zn(2+) site is built by histidine 239 and aspartate 329.

This sequence belongs to the metallo-dependent hydrolases superfamily. ATZ/TRZ family. The cofactor is Zn(2+).

It catalyses the reaction guanine + H2O + H(+) = xanthine + NH4(+). The protein operates within purine metabolism; guanine degradation; xanthine from guanine: step 1/1. Catalyzes the hydrolytic deamination of guanine, producing xanthine and ammonia. The protein is Probable guanine deaminase of Schizosaccharomyces pombe (strain 972 / ATCC 24843) (Fission yeast).